Here is a 617-residue protein sequence, read N- to C-terminus: Dihydroxy-acid dehydratase (617 aa).

Mg(2+) is bound at residue D81. C122 is a [2Fe-2S] cluster binding site. The Mg(2+) site is built by D123 and K124. K124 carries the N6-carboxylysine modification. C195 serves as a coordination point for [2Fe-2S] cluster. Residue E491 participates in Mg(2+) binding. The active-site Proton acceptor is S517.

It belongs to the IlvD/Edd family. Homodimer. [2Fe-2S] cluster is required as a cofactor. It depends on Mg(2+) as a cofactor.

The catalysed reaction is (2R)-2,3-dihydroxy-3-methylbutanoate = 3-methyl-2-oxobutanoate + H2O. It carries out the reaction (2R,3R)-2,3-dihydroxy-3-methylpentanoate = (S)-3-methyl-2-oxopentanoate + H2O. It functions in the pathway amino-acid biosynthesis; L-isoleucine biosynthesis; L-isoleucine from 2-oxobutanoate: step 3/4. It participates in amino-acid biosynthesis; L-valine biosynthesis; L-valine from pyruvate: step 3/4. Functionally, functions in the biosynthesis of branched-chain amino acids. Catalyzes the dehydration of (2R,3R)-2,3-dihydroxy-3-methylpentanoate (2,3-dihydroxy-3-methylvalerate) into 2-oxo-3-methylpentanoate (2-oxo-3-methylvalerate) and of (2R)-2,3-dihydroxy-3-methylbutanoate (2,3-dihydroxyisovalerate) into 2-oxo-3-methylbutanoate (2-oxoisovalerate), the penultimate precursor to L-isoleucine and L-valine, respectively. The polypeptide is Dihydroxy-acid dehydratase (Rhodospirillum rubrum (strain ATCC 11170 / ATH 1.1.1 / DSM 467 / LMG 4362 / NCIMB 8255 / S1)).